The primary structure comprises 155 residues: MSRRGTAEEKTAKSDPIYRNRLVNMLVNRILKHGKKSLAYQIIYRALKKIQQKTETNPLSVLRQAIRGVTPDIAVKARRVGGSTHQVPIEIGSTQGKALAIRWLLGASRKRPGRNMAFKLSSELVDAAKGNGDAIRKKEETHRMAEANRAFAHFR.

The protein belongs to the universal ribosomal protein uS7 family. In terms of assembly, part of the 30S ribosomal subunit.

Its subcellular location is the plastid. The protein resides in the chloroplast. One of the primary rRNA binding proteins, it binds directly to 16S rRNA where it nucleates assembly of the head domain of the 30S subunit. This Amborella trichopoda protein is Small ribosomal subunit protein uS7cz/uS7cy (rps7-A).